Here is a 340-residue protein sequence, read N- to C-terminus: L-galactonate-5-dehydrogenase (340 aa).

Positions 40, 65, 92, 95, 98, 106, and 146 each coordinate Zn(2+).

Belongs to the zinc-containing alcohol dehydrogenase family. Requires Zn(2+) as cofactor.

It catalyses the reaction L-galactonate + NAD(+) = keto-D-tagaturonate + NADH + H(+). Inhibited by EDTA. Catalyzes the oxidation of L-galactonate to D-tagaturonate. Required for growth on L-galactonate as the sole carbon source. In vitro, can also use L-gulonate. The polypeptide is L-galactonate-5-dehydrogenase (lgoD) (Escherichia coli (strain K12)).